A 257-amino-acid chain; its full sequence is Small ribosomal subunit protein uS15m (257 aa).

Residues 1–57 constitute a mitochondrion transit peptide; it reads MLRAAWRALSSVRVQAVTQAPVPALRARSSASLPSARCGLQTPSLLNAARAYAVQKP. A disordered region spans residues 228–257; the sequence is KAAAAAAKKEKRERVPENPSNALPEKTKEN. Residues 234–243 show a composition bias toward basic and acidic residues; sequence AKKEKRERVP.

Belongs to the universal ribosomal protein uS15 family. Component of the mitochondrial ribosome small subunit (28S) which comprises a 12S rRNA and about 30 distinct proteins. Interacts with METTL17.

It is found in the mitochondrion matrix. The sequence is that of Small ribosomal subunit protein uS15m (Mrps15) from Rattus norvegicus (Rat).